The primary structure comprises 224 residues: UPF0758 protein lin1584 (224 aa).

In terms of domain architecture, MPN spans 102–224 (VIRCPEDAVK…YISLKEKGYF (123 aa)). Zn(2+) contacts are provided by histidine 173, histidine 175, and aspartate 186. A JAMM motif motif is present at residues 173–186 (HNHPSGDPAPSSED).

It belongs to the UPF0758 family.

This chain is UPF0758 protein lin1584, found in Listeria innocua serovar 6a (strain ATCC BAA-680 / CLIP 11262).